A 370-amino-acid chain; its full sequence is UDP-N-acetylglucosamine--N-acetylmuramyl-(pentapeptide) pyrophosphoryl-undecaprenol N-acetylglucosamine transferase (370 aa).

Residues 15–17 (TGG), N129, R170, S200, I253, and Q298 each bind UDP-N-acetyl-alpha-D-glucosamine.

This sequence belongs to the glycosyltransferase 28 family. MurG subfamily.

It localises to the cell inner membrane. It catalyses the reaction di-trans,octa-cis-undecaprenyl diphospho-N-acetyl-alpha-D-muramoyl-L-alanyl-D-glutamyl-meso-2,6-diaminopimeloyl-D-alanyl-D-alanine + UDP-N-acetyl-alpha-D-glucosamine = di-trans,octa-cis-undecaprenyl diphospho-[N-acetyl-alpha-D-glucosaminyl-(1-&gt;4)]-N-acetyl-alpha-D-muramoyl-L-alanyl-D-glutamyl-meso-2,6-diaminopimeloyl-D-alanyl-D-alanine + UDP + H(+). Its pathway is cell wall biogenesis; peptidoglycan biosynthesis. In terms of biological role, cell wall formation. Catalyzes the transfer of a GlcNAc subunit on undecaprenyl-pyrophosphoryl-MurNAc-pentapeptide (lipid intermediate I) to form undecaprenyl-pyrophosphoryl-MurNAc-(pentapeptide)GlcNAc (lipid intermediate II). In Salinibacter ruber (strain DSM 13855 / M31), this protein is UDP-N-acetylglucosamine--N-acetylmuramyl-(pentapeptide) pyrophosphoryl-undecaprenol N-acetylglucosamine transferase.